A 177-amino-acid chain; its full sequence is Large ribosomal subunit protein uL6 (177 aa).

This sequence belongs to the universal ribosomal protein uL6 family. Part of the 50S ribosomal subunit.

This protein binds to the 23S rRNA, and is important in its secondary structure. It is located near the subunit interface in the base of the L7/L12 stalk, and near the tRNA binding site of the peptidyltransferase center. The chain is Large ribosomal subunit protein uL6 from Histophilus somni (strain 129Pt) (Haemophilus somnus).